A 680-amino-acid chain; its full sequence is Galactose oxidase (680 aa).

Positions 1–24 (MKHLLTLALCFSSINAVAVTVPHK) are cleaved as a signal peptide. Residues 25–41 (AVGTGIPEGSLQFLSLR) constitute a propeptide that is removed on maturation. The F5/8 type C domain occupies 42–189 (ASAPIGSAIS…SIAEINVFQA (148 aa)). Cysteine 59 and cysteine 68 are oxidised to a cystine. 5 Kelch repeats span residues 223–268 (RVLM…HDMF), 279–321 (QIVV…TMSD), 323–372 (RVFT…LYRS), 436–490 (KILT…VLPD), and 492–544 (STFI…LLLP). The segment at residues 269–313 (CPGISMDGNGQIVVTGGNDAKKTSLYDSSSDSWIPGPDMQVARGY) is a cross-link (3'-(S-cysteinyl)-tyrosine (Cys-Tyr)). Tyrosine 313 provides a ligand contact to Cu cation. Cu cation-binding residues include tyrosine 536 and histidine 537. Tyrosine 536 (proton acceptor) is an active-site residue. A disulfide bond links cysteine 556 and cysteine 559. Histidine 622 serves as a coordination point for Cu cation.

Monomer. Cu(2+) is required as a cofactor. In terms of processing, galactose oxidase contains a protein-derived free radical cofactor. In the active state, Tyr-313, which is cross-linked to Cys-269 via a thioether bond, is oxidized to a radical and acts with Cu(2+) as a two-electron acceptor in the oxidation reaction. The cross-link is believed to modulate the redox potential of the tyrosyl radical, which is further stabilized by a stacking interaction with Trp-331 in the active site. The post-translational formation of the cross-link is closely linked to the propeptide cleavage event, and both are copper-dependent, autocatalytic processes. The propeptide may act as an intramolecular chaperone, facilitating thioester bond formation and copper binding by positioning of active-site residues, including copper ligands.

It is found in the secreted. The enzyme catalyses D-galactose + O2 = D-galacto-hexodialdose + H2O2. Its activity is regulated as follows. Inhibited by diethyldithiocarbamate. In terms of biological role, catalyzes the sterospecific oxidation of primary alcohols to the corresponding aldehydes. The biologically relevant substrate of the enzyme is not known as the enzyme exhibits broad substrate specificity from small alcohols through sugars to oligo- and polysaccharides. The chain is Galactose oxidase (GAOA) from Gibberella zeae (Wheat head blight fungus).